A 631-amino-acid polypeptide reads, in one-letter code: Dolichyl-diphosphooligosaccharide--protein glycosyltransferase subunit 2 (631 aa).

Positions 1 to 22 are cleaved as a signal peptide; that stretch reads MALPGSSTVFLLALTIIASTQA. Topologically, residues 23–540 are lumenal; sequence LTPTHYLTKH…REPEKRPPTV (518 aa). The N-linked (GlcNAc...) asparagine glycan is linked to asparagine 106. Lysine 154 is covalently cross-linked (Glycyl lysine isopeptide (Lys-Gly) (interchain with G-Cter in ubiquitin)). A helical membrane pass occupies residues 541–561; that stretch reads VSNTFTALILSPLLLLFALWI. Residues 562-571 lie on the Cytoplasmic side of the membrane; that stretch reads RIGANVSNFT. The chain crosses the membrane as a helical span at residues 572–592; that stretch reads FAPSTIVFHLGHAAMLGLMYV. The Lumenal portion of the chain corresponds to 593–596; the sequence is YWTQ. A helical membrane pass occupies residues 597–617; sequence LNMFQTLKYLAILGSVTFLAG. The Cytoplasmic portion of the chain corresponds to 618–631; it reads NRMLAQQAIKRTAH.

The protein belongs to the SWP1 family. As to quaternary structure, component of the oligosaccharyltransferase (OST) complex. OST exists in two different complex forms which contain common core subunits RPN1, RPN2, OST48, OST4, DAD1 and TMEM258, either STT3A or STT3B as catalytic subunits, and form-specific accessory subunits. STT3A complex assembly occurs through the formation of 3 subcomplexes. Subcomplex 1 contains RPN1 and TMEM258, subcomplex 2 contains the STT3A-specific subunits STT3A, DC2/OSTC, and KCP2 as well as the core subunit OST4, and subcomplex 3 contains RPN2, DAD1, and OST48. The STT3A complex can form stable complexes with the Sec61 complex or with both the Sec61 and TRAP complexes. Interacts with DDI2. Interacts with TMEM35A/NACHO.

It localises to the endoplasmic reticulum. Its subcellular location is the endoplasmic reticulum membrane. It functions in the pathway protein modification; protein glycosylation. Functionally, subunit of the oligosaccharyl transferase (OST) complex that catalyzes the initial transfer of a defined glycan (Glc(3)Man(9)GlcNAc(2) in eukaryotes) from the lipid carrier dolichol-pyrophosphate to an asparagine residue within an Asn-X-Ser/Thr consensus motif in nascent polypeptide chains, the first step in protein N-glycosylation. N-glycosylation occurs cotranslationally and the complex associates with the Sec61 complex at the channel-forming translocon complex that mediates protein translocation across the endoplasmic reticulum (ER). All subunits are required for a maximal enzyme activity. This is Dolichyl-diphosphooligosaccharide--protein glycosyltransferase subunit 2 from Bos taurus (Bovine).